A 339-amino-acid chain; its full sequence is Bifunctional protein GlmU (339 aa).

A pyrophosphorylase region spans residues 1–234 (MKKENPLAIV…PKDVLGVNSR (234 aa)). Residues 12 to 15 (LAAG), Lys-26, Gln-77, and 82 to 83 (GT) contribute to the UDP-N-acetyl-alpha-D-glucosamine site. Asp-107 is a binding site for Mg(2+). UDP-N-acetyl-alpha-D-glucosamine-binding residues include Gly-144, Glu-159, Asn-174, and Asn-232. Residue Asn-232 coordinates Mg(2+). The tract at residues 235-255 (IELAMADEELRMRRNREVMLT) is linker. Residues 256–339 (GVSMILPATI…KIPAQQREEE (84 aa)) form an N-acetyltransferase region.

This sequence belongs to the N-acetylglucosamine-1-phosphate uridyltransferase family. As to quaternary structure, homotrimer. Mg(2+) is required as a cofactor.

The protein localises to the cytoplasm. It carries out the reaction alpha-D-glucosamine 1-phosphate + acetyl-CoA = N-acetyl-alpha-D-glucosamine 1-phosphate + CoA + H(+). The enzyme catalyses N-acetyl-alpha-D-glucosamine 1-phosphate + UTP + H(+) = UDP-N-acetyl-alpha-D-glucosamine + diphosphate. Its pathway is nucleotide-sugar biosynthesis; UDP-N-acetyl-alpha-D-glucosamine biosynthesis; N-acetyl-alpha-D-glucosamine 1-phosphate from alpha-D-glucosamine 6-phosphate (route II): step 2/2. It participates in nucleotide-sugar biosynthesis; UDP-N-acetyl-alpha-D-glucosamine biosynthesis; UDP-N-acetyl-alpha-D-glucosamine from N-acetyl-alpha-D-glucosamine 1-phosphate: step 1/1. It functions in the pathway bacterial outer membrane biogenesis; LPS lipid A biosynthesis. Catalyzes the last two sequential reactions in the de novo biosynthetic pathway for UDP-N-acetylglucosamine (UDP-GlcNAc). The C-terminal domain catalyzes the transfer of acetyl group from acetyl coenzyme A to glucosamine-1-phosphate (GlcN-1-P) to produce N-acetylglucosamine-1-phosphate (GlcNAc-1-P), which is converted into UDP-GlcNAc by the transfer of uridine 5-monophosphate (from uridine 5-triphosphate), a reaction catalyzed by the N-terminal domain. The polypeptide is Bifunctional protein GlmU (glmU) (Desulfotalea psychrophila (strain LSv54 / DSM 12343)).